A 435-amino-acid polypeptide reads, in one-letter code: 3-phosphoshikimate 1-carboxyvinyltransferase (435 aa).

Residues K22, S23, and R27 each coordinate 3-phosphoshikimate. K22 serves as a coordination point for phosphoenolpyruvate. G94 and R122 together coordinate phosphoenolpyruvate. S166, Q168, D314, and K341 together coordinate 3-phosphoshikimate. Residue Q168 participates in phosphoenolpyruvate binding. Residue D314 is the Proton acceptor of the active site. R345 and R388 together coordinate phosphoenolpyruvate.

The protein belongs to the EPSP synthase family. Monomer.

Its subcellular location is the cytoplasm. The catalysed reaction is 3-phosphoshikimate + phosphoenolpyruvate = 5-O-(1-carboxyvinyl)-3-phosphoshikimate + phosphate. It functions in the pathway metabolic intermediate biosynthesis; chorismate biosynthesis; chorismate from D-erythrose 4-phosphate and phosphoenolpyruvate: step 6/7. Catalyzes the transfer of the enolpyruvyl moiety of phosphoenolpyruvate (PEP) to the 5-hydroxyl of shikimate-3-phosphate (S3P) to produce enolpyruvyl shikimate-3-phosphate and inorganic phosphate. The protein is 3-phosphoshikimate 1-carboxyvinyltransferase of Vesicomyosocius okutanii subsp. Calyptogena okutanii (strain HA).